A 459-amino-acid polypeptide reads, in one-letter code: Vacuolar cation/proton exchanger 3 (459 aa).

Residues 1 to 67 (MGSIVEPWAA…TLKNILSNLQ (67 aa)) are Cytoplasmic-facing. The chain crosses the membrane as a helical span at residues 68–88 (EVILGTKLTLLFLAIPLAILA). Residues 89–95 (NSYNYGR) are Extracellular-facing. Residues 96–116 (PLIFGLSLIGLTPLAERVSFL) traverse the membrane as a helical segment. At 117–129 (TEQLAFYTGPTVG) the chain is on the cytoplasmic side. The helical transmembrane segment at 130–150 (GLLNATCGNATELIIAILALA) threads the bilayer. The tract at residues 137–172 (GNATELIIAILALANNKVAVVKYSLLGSILSNLLLV) is cation selection. Over 151–161 (NNKVAVVKYSL) the chain is Extracellular. The helical transmembrane segment at 162–182 (LGSILSNLLLVLGTSLFFGGI) threads the bilayer. Topologically, residues 183–195 (ANIRREQRFDRKQ) are cytoplasmic. Residues 196 to 216 (ADVNFFLLLMGLLCHLLPLLL) form a helical membrane-spanning segment. Residues 217–238 (KYAATGEVSTSMINKMSLTLSR) are Extracellular-facing. The helical transmembrane segment at 239-259 (TSSIVMLIAYIAYLIFQLWTH) threads the bilayer. At 260–283 (RQLFEAQQDDDDAYDDEVSVEETP) the chain is on the cytoplasmic side. A helical membrane pass occupies residues 284–304 (VIGFWSGFAWLVGMTIVIALL). Topologically, residues 305–327 (SEYVVDTIEDASDSWGLSVSFIS) are extracellular. Residues 328 to 348 (IILLPIVGNAAEHAGAIIFAF) form a helical membrane-spanning segment. The interval 335–370 (GNAAEHAGAIIFAFKNKLDISLGVALGSATQISLFV) is cation selection. The Cytoplasmic segment spans residues 349 to 362 (KNKLDISLGVALGS). The helical transmembrane segment at 363-383 (ATQISLFVVPLSVIVAWILGI) threads the bilayer. Topologically, residues 384–386 (KMD) are extracellular. A helical transmembrane segment spans residues 387–407 (LNFNILETSSLALAIIITAFT). At 408–417 (LQDGTSHYMK) the chain is on the cytoplasmic side. The helical transmembrane segment at 418–438 (GLVLLLCYVIIAACFFVDQIP) threads the bilayer. Residues 439-459 (QPNDLDVGLQPMNNLGEVFSA) are Extracellular-facing.

The protein belongs to the Ca(2+):cation antiporter (CaCA) (TC 2.A.19) family. Cation/proton exchanger (CAX) subfamily. In terms of tissue distribution, expressed in roots, stems and flowers.

The protein resides in the vacuole membrane. Its activity is regulated as follows. Inhibited by excess of Ca(2+). In terms of biological role, vacuolar cation/proton exchanger (CAX). Translocates Ca(2+) and other metal ions into vacuoles using the proton gradient formed by H(+)-ATPase and H(+)-pyrophosphatase. Involved in ion homeostasis in association with CAX1. The polypeptide is Vacuolar cation/proton exchanger 3 (CAX3) (Arabidopsis thaliana (Mouse-ear cress)).